The chain runs to 284 residues: 2-dehydro-3-deoxyphosphooctonate aldolase (284 aa).

It belongs to the KdsA family.

The protein resides in the cytoplasm. The catalysed reaction is D-arabinose 5-phosphate + phosphoenolpyruvate + H2O = 3-deoxy-alpha-D-manno-2-octulosonate-8-phosphate + phosphate. It participates in carbohydrate biosynthesis; 3-deoxy-D-manno-octulosonate biosynthesis; 3-deoxy-D-manno-octulosonate from D-ribulose 5-phosphate: step 2/3. The protein operates within bacterial outer membrane biogenesis; lipopolysaccharide biosynthesis. The protein is 2-dehydro-3-deoxyphosphooctonate aldolase of Yersinia enterocolitica serotype O:8 / biotype 1B (strain NCTC 13174 / 8081).